The following is a 438-amino-acid chain: ATP-dependent RNA helicase RhlB (438 aa).

The Q motif motif lies at 9-37; the sequence is HKFADFGLQPQVIDGLEKKGFVYCTPIQA. The Helicase ATP-binding domain occupies 40–219; the sequence is LPVLLSGQDI…FEHMNNPEHV (180 aa). 53–60 provides a ligand contact to ATP; it reads AQTGTGKT. Positions 165 to 168 match the DEAD box motif; sequence DEAD. One can recognise a Helicase C-terminal domain in the interval 245–390; the sequence is ALLQTLIEEE…TSDYDPSALL (146 aa). The interval 394–438 is disordered; sequence PAPLSLRSSPQQRRTNTAGSRNSNNGGNRKPQQRRPRAPRPKKEA. Residues 406–423 show a composition bias toward low complexity; the sequence is RRTNTAGSRNSNNGGNRK. The segment covering 424 to 438 has biased composition (basic residues); the sequence is PQQRRPRAPRPKKEA.

It belongs to the DEAD box helicase family. RhlB subfamily. In terms of assembly, component of the RNA degradosome, which is a multiprotein complex involved in RNA processing and mRNA degradation.

The protein localises to the cytoplasm. The enzyme catalyses ATP + H2O = ADP + phosphate + H(+). In terms of biological role, DEAD-box RNA helicase involved in RNA degradation. Has RNA-dependent ATPase activity and unwinds double-stranded RNA. The sequence is that of ATP-dependent RNA helicase RhlB from Vibrio cholerae serotype O1 (strain ATCC 39541 / Classical Ogawa 395 / O395).